Consider the following 179-residue polypeptide: MNKSMIQSGGYVLLAGLILAMSSTLFAADNNLHFSGNLLSKSCALVVDGQYLAEVRFPTVSRQDLNVAGQSARVPVVFKLKDCKGPAGYNVKVTLTGVEDSEQPGFLALDTSSTAQGVGIGMEKTDGMQVAINNTNGATFALTNGNNDINFRAWLQAKSGRDVTIGEFTASLTATFEYI.

The first 27 residues, M1–A27, serve as a signal peptide directing secretion. C43 and C83 are joined by a disulfide.

It belongs to the fimbrial protein family.

It is found in the fimbrium. Its function is as follows. Part of the yfcOPQRSUV fimbrial operon. Could contribute to adhesion to various surfaces in specific environmental niches. Increases adhesion to eukaryotic T24 bladder epithelial cells in the absence of fim genes. This is an uncharacterized protein from Escherichia coli (strain K12).